Reading from the N-terminus, the 470-residue chain is MAQRRPAGKKIPFQKDSFLQQFEKLAQSRKHHVLLESARGGRYSIAGLDPIATVKGKDGITTIKHGDEMLFKEGDPLRAFHSWFKTLETETNHEFPDFQGGAIGFLSYDYARYIENFKMLSLDDLETPDIYFLVFDDIAVYDHQEESLWLITHVNGSDQETADVKLSELEQMWLTELPAVTSREMKPETAGSFAAPFTEDGFSQAVEKIKQYIASGDVFQVNLSIRQSQSLSVHPYQIYKTLREVNPSPYMAYLETPDFQIICGSPELLVSKKGKLLETRPIAGTRSRGKTNEEDEALANELIHNEKERAEHVMLVDLERNDLGRVSRYGSVRVNEFMAIEKYSHVMHIVSNVQGELQDGYDAVDIIHAVFPGGTITGAPKVRTMEIIEELEPTRRGLYTGSIGWFGYNHDLQFNIVIRTIYATGGQAFMQSGAGVVIDSVPKHEYKESFKKAFAMQRALELSEEETKIR.

The protein belongs to the anthranilate synthase component I family. Monomer. Heterodimer consisting of two non-identical subunits: a glutamine amidotransferase subunit (PabA) and a aminodeoxychorismate synthase subunit (PabB). The cofactor is Mg(2+).

The enzyme catalyses chorismate + L-glutamine = 4-amino-4-deoxychorismate + L-glutamate. Its pathway is cofactor biosynthesis; tetrahydrofolate biosynthesis; 4-aminobenzoate from chorismate: step 1/2. Its function is as follows. Part of a heterodimeric complex that catalyzes the two-step biosynthesis of 4-amino-4-deoxychorismate (ADC), a precursor of p-aminobenzoate (PABA) and tetrahydrofolate. In the first step, a glutamine amidotransferase (PabA) generates ammonia as a substrate that, along with chorismate, is used in the second step, catalyzed by aminodeoxychorismate synthase (PabB) to produce ADC. The sequence is that of Aminodeoxychorismate synthase component 1 (pabB) from Bacillus subtilis (strain 168).